We begin with the raw amino-acid sequence, 416 residues long: Chorismate synthase (416 aa).

NADP(+) contacts are provided by Arg40 and Arg46. FMN-binding positions include 135–137 (RAS), 256–257 (QA), Gly300, 315–319 (KPIAT), and Arg341.

The protein belongs to the chorismate synthase family. As to quaternary structure, homotetramer. FMNH2 is required as a cofactor.

It carries out the reaction 5-O-(1-carboxyvinyl)-3-phosphoshikimate = chorismate + phosphate. The protein operates within metabolic intermediate biosynthesis; chorismate biosynthesis; chorismate from D-erythrose 4-phosphate and phosphoenolpyruvate: step 7/7. In terms of biological role, catalyzes the anti-1,4-elimination of the C-3 phosphate and the C-6 proR hydrogen from 5-enolpyruvylshikimate-3-phosphate (EPSP) to yield chorismate, which is the branch point compound that serves as the starting substrate for the three terminal pathways of aromatic amino acid biosynthesis. This reaction introduces a second double bond into the aromatic ring system. In Kocuria rhizophila (strain ATCC 9341 / DSM 348 / NBRC 103217 / DC2201), this protein is Chorismate synthase.